Reading from the N-terminus, the 444-residue chain is Methylenetetrahydrofolate--tRNA-(uracil-5-)-methyltransferase TrmFO (444 aa).

An FAD-binding site is contributed by 10 to 15 (GAGLAG).

It belongs to the MnmG family. TrmFO subfamily. FAD serves as cofactor.

It is found in the cytoplasm. It catalyses the reaction uridine(54) in tRNA + (6R)-5,10-methylene-5,6,7,8-tetrahydrofolate + NADH + H(+) = 5-methyluridine(54) in tRNA + (6S)-5,6,7,8-tetrahydrofolate + NAD(+). It carries out the reaction uridine(54) in tRNA + (6R)-5,10-methylene-5,6,7,8-tetrahydrofolate + NADPH + H(+) = 5-methyluridine(54) in tRNA + (6S)-5,6,7,8-tetrahydrofolate + NADP(+). Catalyzes the folate-dependent formation of 5-methyl-uridine at position 54 (M-5-U54) in all tRNAs. In Streptococcus agalactiae serotype III (strain NEM316), this protein is Methylenetetrahydrofolate--tRNA-(uracil-5-)-methyltransferase TrmFO.